We begin with the raw amino-acid sequence, 137 residues long: ATP synthase epsilon chain (137 aa).

The protein belongs to the ATPase epsilon chain family. As to quaternary structure, F-type ATPases have 2 components, CF(1) - the catalytic core - and CF(0) - the membrane proton channel. CF(1) has five subunits: alpha(3), beta(3), gamma(1), delta(1), epsilon(1). CF(0) has three main subunits: a, b and c.

Its subcellular location is the cellular thylakoid membrane. In terms of biological role, produces ATP from ADP in the presence of a proton gradient across the membrane. In Trichodesmium erythraeum (strain IMS101), this protein is ATP synthase epsilon chain.